Here is a 179-residue protein sequence, read N- to C-terminus: ATP synthase subunit b, chloroplastic (179 aa).

A helical membrane pass occupies residues 28 to 46 (IINIAALVGILIYAGRDFL).

Belongs to the ATPase B chain family. As to quaternary structure, F-type ATPases have 2 components, F(1) - the catalytic core - and F(0) - the membrane proton channel. F(1) has five subunits: alpha(3), beta(3), gamma(1), delta(1), epsilon(1). F(0) has four main subunits: a(1), b(1), b'(1) and c(10-14). The alpha and beta chains form an alternating ring which encloses part of the gamma chain. F(1) is attached to F(0) by a central stalk formed by the gamma and epsilon chains, while a peripheral stalk is formed by the delta, b and b' chains.

It localises to the plastid. The protein localises to the chloroplast thylakoid membrane. Functionally, f(1)F(0) ATP synthase produces ATP from ADP in the presence of a proton or sodium gradient. F-type ATPases consist of two structural domains, F(1) containing the extramembraneous catalytic core and F(0) containing the membrane proton channel, linked together by a central stalk and a peripheral stalk. During catalysis, ATP synthesis in the catalytic domain of F(1) is coupled via a rotary mechanism of the central stalk subunits to proton translocation. Its function is as follows. Component of the F(0) channel, it forms part of the peripheral stalk, linking F(1) to F(0). The protein is ATP synthase subunit b, chloroplastic of Trieres chinensis (Marine centric diatom).